The primary structure comprises 245 residues: Acyl-protein thioesterase 1 (245 aa).

Active-site charge relay system residues include serine 126, aspartate 182, and histidine 214.

It belongs to the AB hydrolase superfamily. AB hydrolase 2 family.

It is found in the cytoplasm. It localises to the nucleus. The enzyme catalyses S-hexadecanoyl-L-cysteinyl-[protein] + H2O = L-cysteinyl-[protein] + hexadecanoate + H(+). In terms of biological role, hydrolyzes fatty acids from S-acylated cysteine residues in proteins with a strong preference for palmitoylated G-alpha proteins over other acyl substrates. Mediates the deacylation of G-alpha proteins such as GPA1 in vivo, but has weak or no activity toward palmitoylated Ras proteins. Has weak lysophospholipase activity in vitro; however such activity may not exist in vivo. This Neurospora crassa (strain ATCC 24698 / 74-OR23-1A / CBS 708.71 / DSM 1257 / FGSC 987) protein is Acyl-protein thioesterase 1.